A 357-amino-acid chain; its full sequence is Probable cinnamyl alcohol dehydrogenase (357 aa).

Cysteine 47 provides a ligand contact to Zn(2+). Residue serine 49 participates in NADP(+) binding. Residues histidine 69, glutamate 70, cysteine 100, cysteine 103, cysteine 106, cysteine 114, and cysteine 163 each contribute to the Zn(2+) site. NADP(+)-binding positions include threonine 167, 188–193 (GLGGVG), 211–216 (SSSDKK), threonine 251, glycine 275, and 298–300 (SFI).

Belongs to the zinc-containing alcohol dehydrogenase family. In terms of assembly, homodimer. Requires Zn(2+) as cofactor.

The enzyme catalyses (E)-cinnamyl alcohol + NADP(+) = (E)-cinnamaldehyde + NADPH + H(+). It catalyses the reaction (E)-coniferol + NADP(+) = (E)-coniferaldehyde + NADPH + H(+). The catalysed reaction is (E)-sinapyl alcohol + NADP(+) = (E)-sinapaldehyde + NADPH + H(+). It carries out the reaction (E)-4-coumaroyl alcohol + NADP(+) = (E)-4-coumaraldehyde + NADPH + H(+). The enzyme catalyses (E)-caffeyl alcohol + NADP(+) = (E)-caffeyl aldehyde + NADPH + H(+). Its pathway is aromatic compound metabolism; phenylpropanoid biosynthesis. Its function is as follows. Involved in lignin biosynthesis. Catalyzes the final step specific for the production of lignin monomers. Catalyzes the NADPH-dependent reduction of coniferaldehyde, 5-hydroxyconiferaldehyde, sinapaldehyde, 4-coumaraldehyde and caffeyl aldehyde to their respective alcohols. The sequence is that of Probable cinnamyl alcohol dehydrogenase from Pinus taeda (Loblolly pine).